Here is a 505-residue protein sequence, read N- to C-terminus: Apolipoprotein N-acyltransferase (505 aa).

6 helical membrane-spanning segments follow: residues Leu23–Tyr43, Gly58–Asn78, Pro85–Leu105, Leu125–Phe145, Leu162–Leu182, and Pro192–Leu212. The 240-residue stretch at Ile230–Pro469 folds into the CN hydrolase domain. Residue Glu269 is the Proton acceptor of the active site. Lys329 is an active-site residue. Cys381 serves as the catalytic Nucleophile. A helical transmembrane segment spans residues Trp482–Ala502.

This sequence belongs to the CN hydrolase family. Apolipoprotein N-acyltransferase subfamily.

The protein localises to the cell inner membrane. The enzyme catalyses N-terminal S-1,2-diacyl-sn-glyceryl-L-cysteinyl-[lipoprotein] + a glycerophospholipid = N-acyl-S-1,2-diacyl-sn-glyceryl-L-cysteinyl-[lipoprotein] + a 2-acyl-sn-glycero-3-phospholipid + H(+). The protein operates within protein modification; lipoprotein biosynthesis (N-acyl transfer). Its function is as follows. Catalyzes the phospholipid dependent N-acylation of the N-terminal cysteine of apolipoprotein, the last step in lipoprotein maturation. The sequence is that of Apolipoprotein N-acyltransferase from Pseudomonas putida (strain ATCC 47054 / DSM 6125 / CFBP 8728 / NCIMB 11950 / KT2440).